Reading from the N-terminus, the 517-residue chain is tRNA-2-methylthio-N(6)-dimethylallyladenosine synthase (517 aa).

One can recognise an MTTase N-terminal domain in the interval 29 to 146 (RTYQVRTYGC…LPTLLERARH (118 aa)). [4Fe-4S] cluster contacts are provided by Cys-38, Cys-75, Cys-109, Cys-183, Cys-187, and Cys-190. The Radical SAM core domain occupies 169–405 (RESAYAAWVS…VELQESISLQ (237 aa)). The region spanning 408–475 (QALVGQTVEL…PHHLIADAGV (68 aa)) is the TRAM domain.

Belongs to the methylthiotransferase family. MiaB subfamily. In terms of assembly, monomer. Requires [4Fe-4S] cluster as cofactor.

It localises to the cytoplasm. The catalysed reaction is N(6)-dimethylallyladenosine(37) in tRNA + (sulfur carrier)-SH + AH2 + 2 S-adenosyl-L-methionine = 2-methylsulfanyl-N(6)-dimethylallyladenosine(37) in tRNA + (sulfur carrier)-H + 5'-deoxyadenosine + L-methionine + A + S-adenosyl-L-homocysteine + 2 H(+). Its function is as follows. Catalyzes the methylthiolation of N6-(dimethylallyl)adenosine (i(6)A), leading to the formation of 2-methylthio-N6-(dimethylallyl)adenosine (ms(2)i(6)A) at position 37 in tRNAs that read codons beginning with uridine. This chain is tRNA-2-methylthio-N(6)-dimethylallyladenosine synthase, found in Mycolicibacterium paratuberculosis (strain ATCC BAA-968 / K-10) (Mycobacterium paratuberculosis).